Reading from the N-terminus, the 69-residue chain is DNA gyrase inhibitor YacG (69 aa).

4 residues coordinate Zn(2+): cysteine 14, cysteine 17, cysteine 33, and cysteine 37. Residues 46–69 (ADEEKSIPGAPDMSDSDGWSEDQY) form a disordered region. Positions 59 to 69 (SDSDGWSEDQY) are enriched in acidic residues.

This sequence belongs to the DNA gyrase inhibitor YacG family. In terms of assembly, interacts with GyrB. Zn(2+) serves as cofactor.

Inhibits all the catalytic activities of DNA gyrase by preventing its interaction with DNA. Acts by binding directly to the C-terminal domain of GyrB, which probably disrupts DNA binding by the gyrase. In Aliivibrio fischeri (strain ATCC 700601 / ES114) (Vibrio fischeri), this protein is DNA gyrase inhibitor YacG.